The sequence spans 97 residues: Co-chaperonin GroES (97 aa).

This sequence belongs to the GroES chaperonin family. As to quaternary structure, heptamer of 7 subunits arranged in a ring. Interacts with the chaperonin GroEL.

It localises to the cytoplasm. Functionally, together with the chaperonin GroEL, plays an essential role in assisting protein folding. The GroEL-GroES system forms a nano-cage that allows encapsulation of the non-native substrate proteins and provides a physical environment optimized to promote and accelerate protein folding. GroES binds to the apical surface of the GroEL ring, thereby capping the opening of the GroEL channel. This is Co-chaperonin GroES from Yersinia enterocolitica serotype O:8 / biotype 1B (strain NCTC 13174 / 8081).